Reading from the N-terminus, the 427-residue chain is tRNA(Ile)-lysidine synthase (427 aa).

25–30 (SGGLDS) is a binding site for ATP.

Belongs to the tRNA(Ile)-lysidine synthase family.

Its subcellular location is the cytoplasm. It carries out the reaction cytidine(34) in tRNA(Ile2) + L-lysine + ATP = lysidine(34) in tRNA(Ile2) + AMP + diphosphate + H(+). Ligates lysine onto the cytidine present at position 34 of the AUA codon-specific tRNA(Ile) that contains the anticodon CAU, in an ATP-dependent manner. Cytidine is converted to lysidine, thus changing the amino acid specificity of the tRNA from methionine to isoleucine. This is tRNA(Ile)-lysidine synthase from Histophilus somni (strain 129Pt) (Haemophilus somnus).